The following is a 381-amino-acid chain: CCN family member 1 (381 aa).

Positions 1 to 24 (MSSRIARALALVVTLLHLTRLALS) are cleaved as a signal peptide. The IGFBP N-terminal domain occupies 25 to 94 (TCPAACHCPL…TALKGICRAQ (70 aa)). 6 disulfides stabilise this stretch: C26–C50, C30–C52, C32–C53, C39–C56, C64–C78, and C70–C91. Residues 98–164 (RPCEYNSRIY…GQCCEEWVCD (67 aa)) enclose the VWFC domain. S188 carries the post-translational modification Phosphoserine. The TSP type-1 domain occupies 228 to 273 (KCIVQTTSWSQCSKTCGTGISTRVTNDNPECRLVKETRICEVRPCG). Residues 279–315 (SLKKGKKCSKTKKSPEPVRFTYAGCLSVKKYRPKYCG) are heparin-binding. Cystine bridges form between C286/C323, C303/C337, C314/C353, C317/C355, and C322/C359. The CTCK domain occupies 286–360 (CSKTKKSPEP…QSCKCNYNCP (75 aa)).

This sequence belongs to the CCN family. Interaction with integrins is heparin- and cell-type-dependent and promotes cell adhesion.

It localises to the secreted. Promotes cell proliferation, chemotaxis, angiogenesis and cell adhesion. Appears to play a role in wound healing by up-regulating, in skin fibroblasts, the expression of a number of genes involved in angiogenesis, inflammation and matrix remodeling including VEGA-A, VEGA-C, MMP1, MMP3, TIMP1, uPA, PAI-1 and integrins alpha-3 and alpha-5. CCN1-mediated gene regulation is dependent on heparin-binding. Down-regulates the expression of alpha-1 and alpha-2 subunits of collagen type-1. Promotes cell adhesion and adhesive signaling through integrin alpha-6/beta-1, cell migration through integrin alpha-1/beta-5 and cell proliferation through integrin alpha-v/beta-3. This is CCN family member 1 (CCN1) from Pan troglodytes (Chimpanzee).